The sequence spans 239 residues: Ribonuclease 3 (239 aa).

Positions 12–137 (RAKLEGLIGH…LIAAIYLDGG (126 aa)) constitute an RNase III domain. Position 50 (Glu-50) interacts with Mg(2+). Residue Asp-54 is part of the active site. Residues Asp-123 and Glu-126 each coordinate Mg(2+). Glu-126 is an active-site residue. The region spanning 162 to 231 (DAKTELQEWS…ATKMLEREGI (70 aa)) is the DRBM domain.

Belongs to the ribonuclease III family. In terms of assembly, homodimer. It depends on Mg(2+) as a cofactor.

It is found in the cytoplasm. The enzyme catalyses Endonucleolytic cleavage to 5'-phosphomonoester.. Functionally, digests double-stranded RNA. Involved in the processing of primary rRNA transcript to yield the immediate precursors to the large and small rRNAs (23S and 16S). Processes some mRNAs, and tRNAs when they are encoded in the rRNA operon. Processes pre-crRNA and tracrRNA of type II CRISPR loci if present in the organism. This is Ribonuclease 3 from Rhizobium leguminosarum bv. trifolii (strain WSM2304).